The following is a 323-amino-acid chain: Elongation factor P--(R)-beta-lysine ligase (323 aa).

A substrate-binding site is contributed by S74–E76. Residues R98–E100 and N107 contribute to the ATP site. Residue Y116 participates in substrate binding. Residue E242–L243 participates in ATP binding. E249 is a binding site for substrate. G298 contributes to the ATP binding site.

The protein belongs to the class-II aminoacyl-tRNA synthetase family. EpmA subfamily. In terms of assembly, homodimer.

It catalyses the reaction D-beta-lysine + L-lysyl-[protein] + ATP = N(6)-((3R)-3,6-diaminohexanoyl)-L-lysyl-[protein] + AMP + diphosphate + H(+). Its function is as follows. With EpmB is involved in the beta-lysylation step of the post-translational modification of translation elongation factor P (EF-P). Catalyzes the ATP-dependent activation of (R)-beta-lysine produced by EpmB, forming a lysyl-adenylate, from which the beta-lysyl moiety is then transferred to the epsilon-amino group of a conserved specific lysine residue in EF-P. The protein is Elongation factor P--(R)-beta-lysine ligase of Vibrio parahaemolyticus serotype O3:K6 (strain RIMD 2210633).